The following is a 607-amino-acid chain: MSKVRIYTLAKDLGVENARMLEILDGLGVAYKSVSSTIEEETVDLIKQILEEESAPQAQDSTPVAETPAAAQPAAPQAASSQPAAAQAAQAVAEPVAAPEPAVNEIPHRAPVVTIMGHVDHGKTSLLDYIRKTRVAAKEAGGITQHVGAFEAKTSKGKIVFIDTPGHEAFTTIRARGANVADIAIIVIAADDSLMPQTREAIAHAQAAKVPMIVAINKVDLPQADPERVKTDLTQLNLVPEEYGGDLIVVPVSAKTGEGVEDLLEYISLTAELEDLRADPKGPFSGVIIEGKVDRQAGVLATVMVQEGTLHVGDFLVVGENYGKIKAMTDSAGGRIKEAGPSTPVQVLGFSEVPASGEKVQSAKNEHAARDVIAARADVRRDQENARDRRKTQRTLEDIMGPIGEVRTVNLVLRADTQGSVEALQGILARKEGEDVKINVMLAGIGAPTEGDVLLASTAEATILCFSVTPSGSVTKMAENKGVDIKSYRIIYELIDEVDRLIKGNVEPVFEERYLGRAEVRMVIRHPKSGNIAGSYVTDGMFRRNAKAKVTRGKQTVYEGTIVGLKRFKDDVREVQTGYECGINLDWNDVMEGDIIEASEMVEVEQA.

The interval S54–A93 is disordered. Over residues T62–A93 the composition is skewed to low complexity. A tr-type G domain is found at H108 to K281. A G1 region spans residues G117–T124. Residue G117–T124 participates in GTP binding. Positions G142–H146 are G2. Residues D163–G166 form a G3 region. GTP contacts are provided by residues D163–H167 and N217–D220. Positions N217–D220 are G4. The G5 stretch occupies residues S253–K255.

This sequence belongs to the TRAFAC class translation factor GTPase superfamily. Classic translation factor GTPase family. IF-2 subfamily.

Its subcellular location is the cytoplasm. Functionally, one of the essential components for the initiation of protein synthesis. Protects formylmethionyl-tRNA from spontaneous hydrolysis and promotes its binding to the 30S ribosomal subunits. Also involved in the hydrolysis of GTP during the formation of the 70S ribosomal complex. The sequence is that of Translation initiation factor IF-2 from Deinococcus deserti (strain DSM 17065 / CIP 109153 / LMG 22923 / VCD115).